The primary structure comprises 536 residues: Lysosomal acid glucosylceramidase (536 aa).

Residues 1 to 39 form the signal peptide; the sequence is MELSSPSREECPRPQGRVGIMAASLMGLLLLQAASWASG. Disulfide bonds link Cys-43–Cys-55 and Cys-57–Cys-62. N-linked (GlcNAc...) asparagine glycans are attached at residues Asn-58, Asn-98, and Asn-185. The Proton donor role is filled by Glu-274. Asn-309 is a glycosylation site (N-linked (GlcNAc...) asparagine). Glu-379 acts as the Nucleophile in catalysis. Asn-501 carries an N-linked (GlcNAc...) asparagine glycan.

The protein belongs to the glycosyl hydrolase 30 family. In terms of assembly, interacts with saposin-C. Interacts with SCARB2. Interacts with TCP1. Interacts with GRN; this interaction prevents aggregation of GBA1-SCARB2 complex via interaction with HSPA1A upon stress.

Its subcellular location is the lysosome membrane. It carries out the reaction a beta-D-glucosyl-(1&lt;-&gt;1')-N-acylsphing-4-enine + H2O = an N-acylsphing-4-enine + D-glucose. The catalysed reaction is a beta-D-galactosyl-(1&lt;-&gt;1')-N-acylsphing-4-enine + H2O = an N-acylsphing-4-enine + D-galactose. The enzyme catalyses cholesteryl 3-beta-D-glucoside + H2O = cholesterol + D-glucose. It catalyses the reaction a beta-D-glucosyl-(1&lt;-&gt;1')-N-acylsphing-4-enine + cholesterol = cholesteryl 3-beta-D-glucoside + an N-acylsphing-4-enine. It carries out the reaction beta-D-glucosyl-N-(9Z-octadecenoyl)-sphing-4E-enine + cholesterol = N-(9Z-octadecenoyl)-sphing-4-enine + cholesteryl 3-beta-D-glucoside. The catalysed reaction is beta-D-glucosyl-N-octanoylsphing-4E-enine + cholesterol = N-octanoylsphing-4-enine + cholesteryl 3-beta-D-glucoside. The enzyme catalyses beta-D-glucosyl-N-dodecanoylsphing-4-enine + cholesterol = N-dodecanoylsphing-4-enine + cholesteryl 3-beta-D-glucoside. It catalyses the reaction beta-D-glucosyl-(1&lt;-&gt;1)-N-octadecanoylsphing-4-enine + cholesterol = N-octadecanoylsphing-4-enine + cholesteryl 3-beta-D-glucoside. It carries out the reaction beta-D-glucosyl-(1&lt;-&gt;1')-N-(15Z-tetracosenoyl)-sphing-4-enine + cholesterol = N-(15Z-tetracosenoyl)-sphing-4-enine + cholesteryl 3-beta-D-glucoside. The catalysed reaction is a beta-D-galactosyl-(1&lt;-&gt;1')-N-acylsphing-4-enine + cholesterol = cholesteryl 3-beta-D-galactoside + an N-acylsphing-4-enine. The enzyme catalyses 1-(beta-D-galactosyl)-N-dodecanoylsphing-4-enine + cholesterol = cholesteryl 3-beta-D-galactoside + N-dodecanoylsphing-4-enine. It catalyses the reaction a beta-D-xylosyl-(1&lt;-&gt;1')-N-acylsphing-4-enine + cholesterol = cholesteryl 3-beta-D-xyloside + an N-acylsphing-4-enine. It carries out the reaction beta-D-xylosyl-(1&lt;-&gt;1')-N-(9Z-octadecenoyl)-sphing-4-enine + cholesterol = cholesteryl 3-beta-D-xyloside + N-(9Z-octadecenoyl)-sphing-4-enine. It participates in steroid metabolism; cholesterol metabolism. It functions in the pathway sphingolipid metabolism. Glucosylceramidase that catalyzes, within the lysosomal compartment, the hydrolysis of glucosylceramides/GlcCers (such as beta-D-glucosyl-(1&lt;-&gt;1')-N-acylsphing-4-enine) into free ceramides (such as N-acylsphing-4-enine) and glucose. Plays a central role in the degradation of complex lipids and the turnover of cellular membranes. Through the production of ceramides, participates in the PKC-activated salvage pathway of ceramide formation. Catalyzes the glucosylation of cholesterol, through a transglucosylation reaction where glucose is transferred from GlcCer to cholesterol. GlcCer containing mono-unsaturated fatty acids (such as beta-D-glucosyl-N-(9Z-octadecenoyl)-sphing-4-enine) are preferred as glucose donors for cholesterol glucosylation when compared with GlcCer containing same chain length of saturated fatty acids (such as beta-D-glucosyl-N-octadecanoyl-sphing-4-enine). Under specific conditions, may alternatively catalyze the reverse reaction, transferring glucose from cholesteryl 3-beta-D-glucoside to ceramide. Can also hydrolyze cholesteryl 3-beta-D-glucoside producing glucose and cholesterol. Catalyzes the hydrolysis of galactosylceramides/GalCers (such as beta-D-galactosyl-(1&lt;-&gt;1')-N-acylsphing-4-enine), as well as the transfer of galactose between GalCers and cholesterol in vitro, but with lower activity than with GlcCers. Contrary to GlcCer and GalCer, xylosylceramide/XylCer (such as beta-D-xyosyl-(1&lt;-&gt;1')-N-acylsphing-4-enine) is not a good substrate for hydrolysis, however it is a good xylose donor for transxylosylation activity to form cholesteryl 3-beta-D-xyloside. The protein is Lysosomal acid glucosylceramidase (GBA1) of Sus scrofa (Pig).